An 898-amino-acid chain; its full sequence is Eukaryotic translation initiation factor 3 subunit C (898 aa).

Basic and acidic residues predominate over residues 1–10 (MSRFFHAKED). Disordered regions lie at residues 1–38 (MSRF…DDLD) and 162–238 (VTDY…SVTK). Residues 11–23 (SDSDTSSSEDEVE) show a composition bias toward acidic residues. A compositionally biased stretch (basic and acidic residues) spans 24–37 (DQKVNKSAKFRDDL). The span at 170–187 (DEDGYETPEDEDDDDFGE) shows a compositional bias: acidic residues. Basic and acidic residues predominate over residues 189–202 (SESKAEKSPGKPSE). A compositionally biased stretch (acidic residues) spans 209–218 (SDSDSDDDDS). The span at 219–228 (SNWSSEPESN) shows a compositional bias: low complexity. The PCI domain maps to 630-806 (YHMHINVELM…DCLIMHRVEP (177 aa)). A disordered region spans residues 829 to 898 (QILEPRTGRG…RRHPQKPRAF (70 aa)). Composition is skewed to basic and acidic residues over residues 850–859 (RNERQGDKQK) and 866–878 (GERR…DGKR). The segment covering 888–898 (QRRHPQKPRAF) has biased composition (basic residues).

It belongs to the eIF-3 subunit C family. Component of the eukaryotic translation initiation factor 3 (eIF-3) complex.

The protein resides in the cytoplasm. Component of the eukaryotic translation initiation factor 3 (eIF-3) complex, which is involved in protein synthesis of a specialized repertoire of mRNAs and, together with other initiation factors, stimulates binding of mRNA and methionyl-tRNAi to the 40S ribosome. The eIF-3 complex specifically targets and initiates translation of a subset of mRNAs involved in cell proliferation. This Caenorhabditis elegans protein is Eukaryotic translation initiation factor 3 subunit C.